Here is a 735-residue protein sequence, read N- to C-terminus: ATP-dependent DNA helicase Hel308 (735 aa).

Residues glutamine 32 and 50–57 (APTGSGKT) each bind ATP. A Helicase ATP-binding domain is found at 37 to 201 (QAGVEKGENL…WIGGKIVESS (165 aa)). Positions 146-149 (DEIH) match the DEAH box motif. Residues 235–431 (DLDLAAEAIE…GLRGLRHFIL (197 aa)) form the Helicase C-terminal domain.

This sequence belongs to the helicase family. Hel308 subfamily. Monomer.

It carries out the reaction Couples ATP hydrolysis with the unwinding of duplex DNA by translocating in the 3'-5' direction.. The enzyme catalyses ATP + H2O = ADP + phosphate + H(+). Functionally, DNA-dependent ATPase and 3'-5' DNA helicase that may be involved in repair of stalled replication forks. The polypeptide is ATP-dependent DNA helicase Hel308 (Aeropyrum pernix (strain ATCC 700893 / DSM 11879 / JCM 9820 / NBRC 100138 / K1)).